Reading from the N-terminus, the 610-residue chain is MIASQFLSALTLVLLIKESGAWSYNTSTEAMTYDEASAYCQQRYTHLVAIQNKEEIEYLNSILSYSPSYYWIGIRKVNNVWVWVGTQKPLTEEAKNWAPGEPNNRQKDEDCVEIYIKREKDVGMWNDERCSKKKLALCYTAACTNTSCSGHGECVETINNYTCKCDPGFSGLKCEQIVNCTALESPEHGSLVCSHPLGNFSYNSSCSISCDRGYLPSSMETMQCMSSGEWSAPIPACNVVECDAVTNPANGFVECFQNPGSFPWNTTCTFDCEEGFELMGAQSLQCTSSGNWDNEKPTCKAVTCRAVRQPQNGSVRCSHSPAGEFTFKSSCNFTCEEGFMLQGPAQVECTTQGQWTQQIPVCEAFQCTALSNPERGYMNCLPSASGSFRYGSSCEFSCEQGFVLKGSKRLQCGPTGEWDNEKPTCEAVRCDAVHQPPKGLVRCAHSPIGEFTYKSSCAFSCEEGFELHGSTQLECTSQGQWTEEVPSCQVVKCSSLAVPGKINMSCSGEPVFGTVCKFACPEGWTLNGSAARTCGATGHWSGLLPTCEAPTESNIPLVAGLSAAGLSLLTLAPFLLWLRKCLRKAKKFVPASSCQSLESDGSYQKPSYIL.

The N-terminal stretch at 1–21 (MIASQFLSALTLVLLIKESGA) is a signal peptide. The 118-residue stretch at 22-139 (WSYNTSTEAM…CSKKKLALCY (118 aa)) folds into the C-type lectin domain. Topologically, residues 22–556 (WSYNTSTEAM…CEAPTESNIP (535 aa)) are extracellular. N25 carries N-linked (GlcNAc...) asparagine glycosylation. 5 disulfides stabilise this stretch: C40/C138, C111/C130, C143/C154, C148/C163, and C165/C174. Ca(2+)-binding residues include E101, N103, and E109. A carbohydrate-binding positions include 101-109 (EPNNRQKDE), 113-118 (EIYIKR), and 126-128 (NDE). Ca(2+) is bound by residues N126 and D127. One can recognise an EGF-like domain in the interval 140–175 (TAACTNTSCSGHGECVETINNYTCKCDPGFSGLKCE). N-linked (GlcNAc...) asparagine glycosylation is found at N145 and N160. 6 Sushi domains span residues 178-239 (VNCT…ACNV), 240-301 (VECD…TCKA), 303-364 (TCRA…VCEA), 366-427 (QCTA…TCEA), 429-490 (RCDA…SCQV), and 491-549 (VKCS…TCEA). N179, N199, and N203 each carry an N-linked (GlcNAc...) asparagine glycan. 14 disulfide bridges follow: C180–C224, C193–C206, C210–C237, C242–C286, C255–C268, C272–C299, C304–C349, C335–C362, C367–C412, C398–C425, C430–C475, C461–C488, C493–C534, and C520–C547. N265 carries an N-linked (GlcNAc...) asparagine glycan. N-linked (GlcNAc...) asparagine glycans are attached at residues N312 and N332. N-linked (GlcNAc...) asparagine glycans are attached at residues N503 and N527. A helical transmembrane segment spans residues 557-578 (LVAGLSAAGLSLLTLAPFLLWL). At 579–610 (RKCLRKAKKFVPASSCQSLESDGSYQKPSYIL) the chain is on the cytoplasmic side.

Belongs to the selectin/LECAM family. In terms of assembly, interacts with SELPLG/PSGL1 and PODXL2 through the sialyl Lewis X epitope. SELPLG sulfation appears not to be required for this interaction.

The protein resides in the cell membrane. Functionally, cell-surface glycoprotein having a role in immunoadhesion. Mediates in the adhesion of blood neutrophils in cytokine-activated endothelium through interaction with SELPLG/PSGL1. May have a role in capillary morphogenesis. The polypeptide is E-selectin (SELE) (Homo sapiens (Human)).